Reading from the N-terminus, the 520-residue chain is Cytochrome P450 monooxygenase 176 (520 aa).

A glycan (N-linked (GlcNAc...) asparagine) is linked at Asn6. Residues 10-27 (LLVVAGALFLTFLTTRFI) form a helical membrane-spanning segment. Residues Asn141 and Asn270 are each glycosylated (N-linked (GlcNAc...) asparagine). Residue Cys445 participates in heme binding. An N-linked (GlcNAc...) asparagine glycan is attached at Asn517.

This sequence belongs to the cytochrome P450 family. Requires heme as cofactor.

The protein localises to the membrane. It participates in secondary metabolite biosynthesis. Functionally, cytochrome P450 monooxygenase that is able to use delta(6)-protoilludene as a substrate to produce delta(6)-protoilludene-5-ol and an unidentified hydroxyprotoilludene. Is also able to use phenanthrene as a substrate for oxidation. In Postia placenta (strain ATCC 44394 / Madison 698-R) (Brown rot fungus), this protein is Cytochrome P450 monooxygenase 176.